A 96-amino-acid polypeptide reads, in one-letter code: Venom protein 3.1 (96 aa).

Positions 1-25 (MKFSLISVFLFAVFLSNENIFQAIA) are cleaved as a signal peptide. The disordered stretch occupies residues 45-84 (EAVMSSSLTNEEESRNWPHRATRNTLEKGQKRSPAARSEI).

It belongs to the non-disulfide-bridged peptide (NDBP) superfamily. As to expression, expressed by the venom gland.

Its subcellular location is the secreted. The protein is Venom protein 3.1 of Lychas mucronatus (Chinese swimming scorpion).